The primary structure comprises 721 residues: Long-chain-fatty-acid--CoA ligase ACSBG1 (721 aa).

Positions 1–64 (MPRSSEAGYC…SHGLELSAPE (64 aa)) are disordered. Residues 26 to 43 (QQGASMGTSPDNSQTSSL) show a composition bias toward polar residues. A phosphoserine mark is found at S34, S50, S53, and S70. Residues 279–287 (TSGTTGNPK), 469–474 (AGYGLS), D547, and R562 contribute to the ATP site. The residue at position 655 (Y655) is a Phosphotyrosine. ATP is bound at residue K698.

It belongs to the ATP-dependent AMP-binding enzyme family. Bubblegum subfamily. Present in testis, at a lower level in brain, and at a very low level in ovary. Not detected in other tissues. tested. Present in Leydig cells of the adult testis and to a lesser degree in the seminiferous tubules in spermatogonia and Sertoli cells (at protein level).

It is found in the cytoplasm. The protein resides in the cytoplasmic vesicle. It localises to the microsome. The protein localises to the endoplasmic reticulum. Its subcellular location is the cell membrane. The enzyme catalyses a long-chain fatty acid + ATP + CoA = a long-chain fatty acyl-CoA + AMP + diphosphate. It carries out the reaction (E)-hexadec-2-enoate + ATP + CoA = (2E)-hexadecenoyl-CoA + AMP + diphosphate. The catalysed reaction is hexadecanoate + ATP + CoA = hexadecanoyl-CoA + AMP + diphosphate. Catalyzes the conversion of fatty acids such as long-chain and very long-chain fatty acids to their active form acyl-CoAs for both synthesis of cellular lipids, and degradation via beta-oxidation. Can activate diverse saturated, monosaturated and polyunsaturated fatty acids. The protein is Long-chain-fatty-acid--CoA ligase ACSBG1 of Rattus norvegicus (Rat).